The primary structure comprises 474 residues: Glutathione synthetase (474 aa).

Position 125 (arginine 125) interacts with substrate. Residue glutamate 144 participates in ATP binding. Positions 144 and 146 each coordinate Mg(2+). Residues 148–151, 214–216, glutamine 220, and 267–270 contribute to the substrate site; these read IAAS, QRN, and RTGY. ATP contacts are provided by residues lysine 305, 364–373, tyrosine 375, 398–401, and glutamate 425; these read KPQREGGGNN and MDKI. Position 368 (glutamate 368) interacts with Mg(2+). Arginine 450 is a binding site for substrate. ATP-binding residues include lysine 452 and aspartate 458. A substrate-binding site is contributed by 461–462; the sequence is VA.

The protein belongs to the eukaryotic GSH synthase family. As to quaternary structure, homodimer. Requires Mg(2+) as cofactor. In terms of tissue distribution, expressed ubiquitously.

It carries out the reaction gamma-L-glutamyl-L-cysteine + glycine + ATP = glutathione + ADP + phosphate + H(+). It catalyses the reaction gamma-L-glutamyl-(2S)-2-aminobutanoate + glycine + ATP = ophthalmate + ADP + phosphate + H(+). The protein operates within sulfur metabolism; glutathione biosynthesis; glutathione from L-cysteine and L-glutamate: step 2/2. Functionally, catalyzes the production of glutathione from gamma-glutamylcysteine and glycine in an ATP-dependent manner. Glutathione (gamma-glutamylcysteinylglycine, GSH) is the most abundant intracellular thiol in living aerobic cells and is required for numerous processes including the protection of cells against oxidative damage, amino acid transport, the detoxification of foreign compounds, the maintenance of protein sulfhydryl groups in a reduced state and acts as a cofactor for a number of enzymes. Participates in ophthalmate biosynthesis in hepatocytes. In Xenopus laevis (African clawed frog), this protein is Glutathione synthetase.